Here is a 135-residue protein sequence, read N- to C-terminus: Transcription antitermination protein NusB (135 aa).

It belongs to the NusB family.

In terms of biological role, involved in transcription antitermination. Required for transcription of ribosomal RNA (rRNA) genes. Binds specifically to the boxA antiterminator sequence of the ribosomal RNA (rrn) operons. This Clostridium perfringens (strain SM101 / Type A) protein is Transcription antitermination protein NusB.